Consider the following 173-residue polypeptide: Translation initiation factor IF-3 (173 aa).

Belongs to the IF-3 family. Monomer.

It is found in the cytoplasm. In terms of biological role, IF-3 binds to the 30S ribosomal subunit and shifts the equilibrium between 70S ribosomes and their 50S and 30S subunits in favor of the free subunits, thus enhancing the availability of 30S subunits on which protein synthesis initiation begins. This Enterococcus faecalis (strain ATCC 700802 / V583) protein is Translation initiation factor IF-3.